The following is a 29-amino-acid chain: MDIVSLAWAALMIVFTFSLSLVVWGRSGL.

A helical membrane pass occupies residues 3-23 (IVSLAWAALMIVFTFSLSLVV).

The protein belongs to the PetN family. The 4 large subunits of the cytochrome b6-f complex are cytochrome b6, subunit IV (17 kDa polypeptide, PetD), cytochrome f and the Rieske protein, while the 4 small subunits are PetG, PetL, PetM and PetN. The complex functions as a dimer.

The protein resides in the plastid membrane. Its function is as follows. Component of the cytochrome b6-f complex, which mediates electron transfer between photosystem II (PSII) and photosystem I (PSI), cyclic electron flow around PSI, and state transitions. The protein is Cytochrome b6-f complex subunit 8 of Cuscuta exaltata (Tall dodder).